Consider the following 231-residue polypeptide: Demethylmenaquinone methyltransferase (231 aa).

S-adenosyl-L-methionine is bound by residues Thr-62, Asp-80, 102 to 103 (DA), and Ser-119.

Belongs to the class I-like SAM-binding methyltransferase superfamily. MenG/UbiE family.

It carries out the reaction a 2-demethylmenaquinol + S-adenosyl-L-methionine = a menaquinol + S-adenosyl-L-homocysteine + H(+). It functions in the pathway quinol/quinone metabolism; menaquinone biosynthesis; menaquinol from 1,4-dihydroxy-2-naphthoate: step 2/2. Its function is as follows. Methyltransferase required for the conversion of demethylmenaquinol (DMKH2) to menaquinol (MKH2). The sequence is that of Demethylmenaquinone methyltransferase from Streptomyces avermitilis (strain ATCC 31267 / DSM 46492 / JCM 5070 / NBRC 14893 / NCIMB 12804 / NRRL 8165 / MA-4680).